The sequence spans 149 residues: D-aminoacyl-tRNA deacylase (149 aa).

A Gly-cisPro motif, important for rejection of L-amino acids motif is present at residues 137 to 138 (GP).

This sequence belongs to the DTD family. In terms of assembly, homodimer.

Its subcellular location is the cytoplasm. The enzyme catalyses glycyl-tRNA(Ala) + H2O = tRNA(Ala) + glycine + H(+). It carries out the reaction a D-aminoacyl-tRNA + H2O = a tRNA + a D-alpha-amino acid + H(+). An aminoacyl-tRNA editing enzyme that deacylates mischarged D-aminoacyl-tRNAs. Also deacylates mischarged glycyl-tRNA(Ala), protecting cells against glycine mischarging by AlaRS. Acts via tRNA-based rather than protein-based catalysis; rejects L-amino acids rather than detecting D-amino acids in the active site. By recycling D-aminoacyl-tRNA to D-amino acids and free tRNA molecules, this enzyme counteracts the toxicity associated with the formation of D-aminoacyl-tRNA entities in vivo and helps enforce protein L-homochirality. The chain is D-aminoacyl-tRNA deacylase from Janthinobacterium sp. (strain Marseille) (Minibacterium massiliensis).